The following is a 224-amino-acid chain: dTTP/UTP pyrophosphatase (224 aa).

Catalysis depends on aspartate 77, which acts as the Proton acceptor.

Belongs to the Maf family. YhdE subfamily. A divalent metal cation serves as cofactor.

The protein resides in the cytoplasm. It carries out the reaction dTTP + H2O = dTMP + diphosphate + H(+). The catalysed reaction is UTP + H2O = UMP + diphosphate + H(+). Nucleoside triphosphate pyrophosphatase that hydrolyzes dTTP and UTP. May have a dual role in cell division arrest and in preventing the incorporation of modified nucleotides into cellular nucleic acids. In Dehalococcoides mccartyi (strain ATCC BAA-2100 / JCM 16839 / KCTC 5957 / BAV1), this protein is dTTP/UTP pyrophosphatase.